A 635-amino-acid polypeptide reads, in one-letter code: Multiple inositol polyphosphate phosphatase 1 (635 aa).

Positions 1-23 (MMVKIKNIIILFCIFGLLSNVSS) are cleaved as a signal peptide. The Extracellular segment spans residues 24-565 (LSSSSSSSQS…GNDSHSKKSS (542 aa)). The disordered stretch occupies residues 66–102 (KNGDSNSQGDGSSGNSNSNSNSNSNSNSNSDSSNEPP). The span at 67–99 (NGDSNSQGDGSSGNSNSNSNSNSNSNSNSDSSN) shows a compositional bias: low complexity. Residue His-116 is part of the active site. Positions 380–421 (SSSSSSSSSSNNGDNSGSNGSSGSGSSTSTSSNDNGSTNNND) are enriched in low complexity. A disordered region spans residues 380-425 (SSSSSSSSSSNNGDNSGSNGSSGSGSSTSTSSNDNGSTNNNDNKVE). The helical transmembrane segment at 566 to 586 (YFLAIFIPITFLVGGTIGGIF) threads the bilayer. The Cytoplasmic portion of the chain corresponds to 587-635 (TYFSYEKIMQVKNRKKLTQYGNDEFISSPKSKSFSFKPTKFDSRSPLIQ). Positions 614–624 (SPKSKSFSFKP) are enriched in low complexity. The disordered stretch occupies residues 614 to 635 (SPKSKSFSFKPTKFDSRSPLIQ).

The protein belongs to the histidine acid phosphatase family. MINPP1 subfamily.

It is found in the membrane. It carries out the reaction 1D-myo-inositol hexakisphosphate + H2O = 1D-myo-inositol 1,2,4,5,6-pentakisphosphate + phosphate. The catalysed reaction is 1D-myo-inositol 1,2,4,5,6-pentakisphosphate + H2O = 1D-myo-inositol 1,2,5,6-tetrakisphosphate + phosphate. It catalyses the reaction 1D-myo-inositol 1,2,5,6-tetrakisphosphate + H2O = 1D-myo-inositol 1,2,6-trisphosphate + phosphate. The enzyme catalyses 1D-myo-inositol 1,2,6-trisphosphate + H2O = 1D-myo-inositol 1,2-bisphosphate + phosphate. It carries out the reaction 1D-myo-inositol 1,2-bisphosphate + H2O = 1D-myo-inositol 2-phosphate + phosphate. The catalysed reaction is (2R)-2,3-bisphosphoglycerate + H2O = (2R)-2-phosphoglycerate + phosphate. Its function is as follows. Probable multiple inositol polyphosphate phosphatase that hydrolyzes 1D-myo-inositol 1,3,4,5,6-pentakisphosphate (InsP5[2OH]) and 1D-myo-inositol hexakisphosphate (InsP6) to a range of less phosphorylated inositol phosphates. This regulates the availability of these various small molecule second messengers and metal chelators which control many aspects of cell physiology. May have a dual substrate specificity, and function as a 2,3-bisphosphoglycerate 3-phosphatase hydrolyzing 2,3-bisphosphoglycerate to 2-phosphoglycerate. 2,3-bisphosphoglycerate (BPG) is formed as part of the Rapoport-Luebering glycolytic bypass. The chain is Multiple inositol polyphosphate phosphatase 1 (mipp1) from Dictyostelium discoideum (Social amoeba).